The primary structure comprises 91 residues: MKLDENEIKRRLGEIEGWSYENNKLKKTFKFKNFYESVEFVRKIQPIADEMDHHPDLCVYYNRVVLELSTHSEGGVTEKDFELAKKINKIQ.

This sequence belongs to the pterin-4-alpha-carbinolamine dehydratase family.

It carries out the reaction (4aS,6R)-4a-hydroxy-L-erythro-5,6,7,8-tetrahydrobiopterin = (6R)-L-erythro-6,7-dihydrobiopterin + H2O. This is Putative pterin-4-alpha-carbinolamine dehydratase from Sulfolobus acidocaldarius (strain ATCC 33909 / DSM 639 / JCM 8929 / NBRC 15157 / NCIMB 11770).